Here is a 257-residue protein sequence, read N- to C-terminus: Type 2 phosphatidylinositol 4,5-bisphosphate 4-phosphatase (257 aa).

Residues 1–10 (MAADGVDERS) show a composition bias toward basic and acidic residues. The segment at 1–34 (MAADGVDERSPLLSASHSGSVTPTAPPYLQDSSP) is disordered. The segment covering 13 to 23 (LSASHSGSVTP) has biased composition (polar residues). T22 carries the phosphothreonine modification. S33 carries the phosphoserine modification. The active site involves C107. A CX5R motif motif is present at residues 107–113 (CKDTSRR). 2 helical membrane passes run 192-212 (CCAY…LTVG) and 227-247 (WAIA…WGAI).

It localises to the late endosome membrane. The protein resides in the lysosome membrane. The protein localises to the cytoplasmic vesicle. It is found in the phagosome membrane. Its subcellular location is the cell membrane. It catalyses the reaction a 1,2-diacyl-sn-glycero-3-phospho-(1D-myo-inositol-4,5-bisphosphate) + H2O = a 1,2-diacyl-sn-glycero-3-phospho-(1D-myo-inositol-5-phosphate) + phosphate. Catalyzes the hydrolysis of phosphatidylinositol-4,5-bisphosphate (PtdIns-4,5-P2) to phosphatidylinositol-4-phosphate (PtdIns-4-P). Does not hydrolyze phosphatidylinositol 3,4,5-trisphosphate, phosphatidylinositol 3,4-bisphosphate, inositol 3,5-bisphosphate, inositol 3,4-bisphosphate, phosphatidylinositol 5-monophosphate, phosphatidylinositol 4-monophosphate and phosphatidylinositol 3-monophosphate. Negatively regulates the phagocytosis of large particles by reducing phagosomal phosphatidylinositol 4,5-bisphosphate accumulation during cup formation. This chain is Type 2 phosphatidylinositol 4,5-bisphosphate 4-phosphatase, found in Bos taurus (Bovine).